Reading from the N-terminus, the 350-residue chain is Serine-threonine kinase receptor-associated protein (350 aa).

7 WD repeats span residues 12–56 (GHTR…GTFL), 57–96 (GHKG…ELMT), 98–137 (AHKH…AEPK), 141–179 (GHTS…EVKS), 180–212 (LNFN…HSAV), 221–262 (EAPA…ESYK), and 263–302 (GHFG…TYGL). Residues serine 312, serine 335, and serine 338 each carry the phosphoserine modification. The tract at residues 327–350 (EEELEEIASENSDSIYSSTPEVKA) is disordered. Polar residues predominate over residues 337–350 (NSDSIYSSTPEVKA). Phosphotyrosine is present on tyrosine 342.

This sequence belongs to the WD repeat STRAP family. As to quaternary structure, part of the core SMN complex that contains SMN1, GEMIN2/SIP1, DDX20/GEMIN3, GEMIN4, GEMIN5, GEMIN6, GEMIN7, GEMIN8 and STRAP/UNRIP. Part of the SMN-Sm complex that contains SMN1, GEMIN2/SIP1, DDX20/GEMIN3, GEMIN4, GEMIN5, GEMIN6, GEMIN7, GEMIN8, STRAP/UNRIP and the Sm proteins SNRPB, SNRPD1, SNRPD2, SNRPD3, SNRPE, SNRPF and SNRPG. Interacts directly with GEMIN6 and GEMIN7. Associates with the SMN complex in the cytoplasm but not in the nucleus. Also interacts with CSDE1/UNR and MAWBP. Interacts with PDPK1. Interacts with TRIM48.

It localises to the cytoplasm. It is found in the nucleus. In terms of biological role, the SMN complex catalyzes the assembly of small nuclear ribonucleoproteins (snRNPs), the building blocks of the spliceosome, and thereby plays an important role in the splicing of cellular pre-mRNAs. Most spliceosomal snRNPs contain a common set of Sm proteins SNRPB, SNRPD1, SNRPD2, SNRPD3, SNRPE, SNRPF and SNRPG that assemble in a heptameric protein ring on the Sm site of the small nuclear RNA to form the core snRNP (Sm core). In the cytosol, the Sm proteins SNRPD1, SNRPD2, SNRPE, SNRPF and SNRPG are trapped in an inactive 6S pICln-Sm complex by the chaperone CLNS1A that controls the assembly of the core snRNP. To assemble core snRNPs, the SMN complex accepts the trapped 5Sm proteins from CLNS1A forming an intermediate. Binding of snRNA inside 5Sm triggers eviction of the SMN complex, thereby allowing binding of SNRPD3 and SNRPB to complete assembly of the core snRNP. STRAP plays a role in the cellular distribution of the SMN complex. Negatively regulates TGF-beta signaling but positively regulates the PDPK1 kinase activity by enhancing its autophosphorylation and by significantly reducing the association of PDPK1 with 14-3-3 protein. This Bos taurus (Bovine) protein is Serine-threonine kinase receptor-associated protein (STRAP).